Reading from the N-terminus, the 260-residue chain is MICOS complex subunit mic25-a (260 aa).

Positions 1 to 92 are disordered; sequence MGGSESTGRK…KPTARGVGHQ (92 aa). Residue Gly-2 is the site of N-myristoyl glycine attachment. Over residues 28–39 the composition is skewed to basic and acidic residues; sequence RLSDEVVNRMKD. Low complexity predominate over residues 48–64; sequence STSTASGTTSGPTTFPS. Residues 94 to 187 are a coiled coil; that stretch reads AEEDLYRRYE…LNSIEKKNLE (94 aa). The region spanning 213–255 is the CHCH domain; that stretch reads DPVCMDLQSNILKCYAENKQERLNCSDLAKEYGKCVSAAQKNL. 2 consecutive short sequence motifs (cx9C motif) follow at residues 216-226 and 237-247; these read CMDLQSNILKC and CSDLAKEYGKC. 2 cysteine pairs are disulfide-bonded: Cys-216–Cys-247 and Cys-226–Cys-237.

This sequence belongs to the MICOS complex subunit Mic19 family. Metazoan Mic25 subfamily. As to quaternary structure, component of the mitochondrial contact site and cristae organizing system (MICOS) complex (also known as MINOS or MitOS complex).

Its subcellular location is the mitochondrion inner membrane. Functionally, component of the MICOS complex, a large protein complex of the mitochondrial inner membrane that plays crucial roles in the maintenance of crista junctions, inner membrane architecture, and formation of contact sites to the outer membrane. In Xenopus laevis (African clawed frog), this protein is MICOS complex subunit mic25-a (chchd6-a).